The primary structure comprises 572 residues: Urease subunit alpha (572 aa).

In terms of domain architecture, Urease spans 136–572 (GGIDTHIHWI…VPLAQRYFLF (437 aa)). Residues His141, His143, and Lys224 each coordinate Ni(2+). N6-carboxylysine is present on Lys224. Residue His226 coordinates substrate. Ni(2+) contacts are provided by His253 and His279. His327 serves as the catalytic Proton donor. Asp367 provides a ligand contact to Ni(2+).

It belongs to the metallo-dependent hydrolases superfamily. Urease alpha subunit family. As to quaternary structure, heterotrimer of UreA (gamma), UreB (beta) and UreC (alpha) subunits. Three heterotrimers associate to form the active enzyme. It depends on Ni cation as a cofactor. Carboxylation allows a single lysine to coordinate two nickel ions.

The protein resides in the cytoplasm. The catalysed reaction is urea + 2 H2O + H(+) = hydrogencarbonate + 2 NH4(+). Its pathway is nitrogen metabolism; urea degradation; CO(2) and NH(3) from urea (urease route): step 1/1. The chain is Urease subunit alpha from Actinobacillus pleuropneumoniae serotype 7 (strain AP76).